Reading from the N-terminus, the 246-residue chain is MyoD family inhibitor domain-containing protein (246 aa).

A disordered region spans residues 1 to 71; sequence MSGAGEALAP…WGNPSDGELI (71 aa). A compositionally biased stretch (basic and acidic residues) spans 33 to 43; the sequence is KCDKDNTEKDI. Residues 44 to 63 are compositionally biased toward polar residues; the sequence is TQATNSHFTHGEMQDQSIWG. In terms of domain architecture, MDFI spans 74 to 246; sequence QPQRLPQLQT…MECCGICFPS (173 aa). 3 positions are modified to phosphoserine: Ser128, Ser140, and Ser143.

Belongs to the MDFI family. In terms of assembly, interacts with HAND1; the interaction sequesters HAND1 into the nucleolus and inhibits its activity. Interacts (via C-terminus) with ZIC2. Interacts (via C-terminus) with AXIN1, the histidine-rich region of CCNT1/cyclin-T and weakly with LEF1. Interacts with CCNT2. Interacts with GATA2. Interacts (via C-terminus) with Piezo channel composed of PIEZO1 or PIEZO2; the interaction prolongs Piezo channel inactivation. As to quaternary structure, (Microbial infection) Interacts (via C-terminus) with HIV-1 Tat and Rev. In terms of processing, palmitoylated. As to expression, expressed in lymphatic tissues. Detected in the spleen, thymus, peripheral blood leukocytes as well as prostate, uterus and small intestine. Expressed in lymphatic endothelial cells.

It is found in the nucleus. The protein localises to the nucleolus. It localises to the cytoplasm. Its subcellular location is the secreted. Functionally, required to control the activity of various transcription factors through their sequestration in the cytoplasm. Retains nuclear Zic proteins ZIC1, ZIC2 and ZIC3 in the cytoplasm and inhibits their transcriptional activation. Modulates the expression from cellular promoters. Binds to the axin complex, resulting in an increase in the level of free beta-catenin. Affects axin regulation of the WNT and JNK signaling pathways. Involved in the development of lymphatic vessel valves. Required to promote lymphatic endothelial cell migration, in a process that involves down-regulation of integrin beta 1 activation and control of cell adhesion to the extracellular matrix. Regulates the activity of mechanosensitive Piezo channel. Its function is as follows. (Microbial infection) Modulates the expression from viral promoters. Down-regulates Tat-dependent transcription of the human immunodeficiency virus type 1 (HIV-1) LTR by interacting with HIV-1 Tat and Rev and impairing their nuclear import, probably by rendering the NLS domains inaccessible to importin-beta. Also stimulates activation of human T-cell leukemia virus type I (HTLV-I) LTR. The protein is MyoD family inhibitor domain-containing protein of Homo sapiens (Human).